Here is a 135-residue protein sequence, read N- to C-terminus: Transcription antitermination protein NusB (135 aa).

This sequence belongs to the NusB family.

Involved in transcription antitermination. Required for transcription of ribosomal RNA (rRNA) genes. Binds specifically to the boxA antiterminator sequence of the ribosomal RNA (rrn) operons. In Clostridium perfringens (strain ATCC 13124 / DSM 756 / JCM 1290 / NCIMB 6125 / NCTC 8237 / Type A), this protein is Transcription antitermination protein NusB.